A 156-amino-acid chain; its full sequence is Small ribosomal subunit protein uS7 (156 aa).

It belongs to the universal ribosomal protein uS7 family. As to quaternary structure, part of the 30S ribosomal subunit. Contacts proteins S9 and S11.

One of the primary rRNA binding proteins, it binds directly to 16S rRNA where it nucleates assembly of the head domain of the 30S subunit. Is located at the subunit interface close to the decoding center, probably blocks exit of the E-site tRNA. This Acholeplasma laidlawii (strain PG-8A) protein is Small ribosomal subunit protein uS7.